A 490-amino-acid polypeptide reads, in one-letter code: AP-5 complex subunit mu-1 (490 aa).

An MHD domain is found at 206 to 476; that stretch reads KAQISISITE…LISSDYYIWN (271 aa).

This sequence belongs to the adaptor complexes medium subunit family. As to quaternary structure, probably part of the adaptor protein complex 5 (AP-5) a tetramer composed of AP5B1, AP5M1, AP5S1 and AP5Z1. As to expression, widely expressed, including in small intestine and testis. In small intestine, highly expressed in cytoplasm of villi epithelial cells and internal glands. In testis, selectively expressed in maturing sperm cells (at protein level).

The protein localises to the cytoplasm. Its subcellular location is the cytosol. It localises to the late endosome membrane. The protein resides in the lysosome membrane. Functionally, as part of AP-5, a probable fifth adaptor protein complex it may be involved in endosomal transport. This is AP-5 complex subunit mu-1 (Ap5m1) from Mus musculus (Mouse).